Reading from the N-terminus, the 336-residue chain is Tyrosine recombinase XerC (336 aa).

The 93-residue stretch at V14–L106 folds into the Core-binding (CB) domain. The Tyr recombinase domain occupies K127–T330. Active-site residues include R183, K207, H282, R285, and H308. The O-(3'-phospho-DNA)-tyrosine intermediate role is filled by Y317.

The protein belongs to the 'phage' integrase family. XerC subfamily. Forms a cyclic heterotetrameric complex composed of two molecules of XerC and two molecules of XerD.

It localises to the cytoplasm. Site-specific tyrosine recombinase, which acts by catalyzing the cutting and rejoining of the recombining DNA molecules. The XerC-XerD complex is essential to convert dimers of the bacterial chromosome into monomers to permit their segregation at cell division. It also contributes to the segregational stability of plasmids. This Chlorobaculum tepidum (strain ATCC 49652 / DSM 12025 / NBRC 103806 / TLS) (Chlorobium tepidum) protein is Tyrosine recombinase XerC.